Reading from the N-terminus, the 3390-residue chain is Genome polyprotein (3390 aa).

An interaction with host EXOC1 region spans residues 1–15 (MNNQRKKTGKPSINM). The Cytoplasmic portion of the chain corresponds to 1–100 (MNNQRKKTGK…MLSIINKRKK (100 aa)). The segment at 37–72 (LLNGQGPMKLVMAFIAFLRFLAIPPTAGVLARWGTF) is hydrophobic; homodimerization of capsid protein C. Positions 101-114 (TSLCLMMMLPATLA) are cleaved as a propeptide — ER anchor for the capsid protein C, removed in mature form by serine protease NS3. The chain crosses the membrane as a helical span at residues 101-118 (TSLCLMMMLPATLAFHLT). The Extracellular segment spans residues 119 to 243 (SRDGEPRMIV…VEKVETWALR (125 aa)). N183 is a glycosylation site (N-linked (GlcNAc...) asparagine; by host). A helical membrane pass occupies residues 244–264 (HPGFTILALFLAHYIGTSLTQ). K265 is a topological domain (cytoplasmic). A helical membrane pass occupies residues 266-280 (VVIFILLMLVTPSMT). Residues 281–723 (MRCVGVGNRD…VHQIFGSAYT (443 aa)) lie on the Extracellular side of the membrane. Disulfide bonds link C283-C310, C340-C401, C354-C385, and C372-C396. N347 carries N-linked (GlcNAc...) asparagine; by host glycosylation. Residues 378–391 (DRGWGNGCGLFGKG) form a fusion peptide region. Residue N433 is glycosylated (N-linked (GlcNAc...) asparagine; by host). Cystine bridges form between C463–C563 and C580–C611. Residues 724–744 (ALFSGVSWIMKIGIGVLLTWI) form a helical membrane-spanning segment. Topologically, residues 745-750 (GLNSKN) are cytoplasmic. The helical transmembrane segment at 751–771 (TSMSFSCIAIGIITLYLGVVV) threads the bilayer. The Extracellular portion of the chain corresponds to 772 to 1193 (QADMGCVINW…MIGSNASDRM (422 aa)). 6 cysteine pairs are disulfide-bonded: C777-C788, C828-C916, C952-C996, C1053-C1102, C1064-C1086, and C1085-C1089. N-linked (GlcNAc...) asparagine; by host glycosylation is found at N903 and N980. N-linked (GlcNAc...) asparagine; by host glycans are attached at residues N1132 and N1188. A helical membrane pass occupies residues 1194–1218 (GMGVTYLALIATFKIQPFLALGFFL). The Cytoplasmic portion of the chain corresponds to 1219 to 1224 (RKLTSR). Residues 1225-1243 (ENLLLGVGLAMAATLRLPE) form a helical membrane-spanning segment. The Lumenal portion of the chain corresponds to 1244 to 1267 (DIEQMANGIALGLMALKLITQFET). Residues 1268 to 1288 (YQLWTALVSLTCSNTIFTLTV) traverse the membrane as a helical segment. Residue A1289 is a topological domain, cytoplasmic. Residues 1290-1308 (WRTATLILAGISLLPVCQS) traverse the membrane as a helical segment. Topologically, residues 1309 to 1315 (SSMRKTD) are lumenal. Residues 1316–1336 (WLPMTVAAMGVPPLPLFIFSL) traverse the membrane as a helical segment. At 1337 to 1344 (KDTLKRRS) the chain is on the cytoplasmic side. A helical transmembrane segment spans residues 1345–1365 (WPLNEGVMAVGLVSILASSLL). The Lumenal segment spans residues 1366–1368 (RND). Residues 1369-1389 (VPMAGPLVAGGLLIACYVITG) form a helical membrane-spanning segment. The Cytoplasmic segment spans residues 1390 to 1443 (TSADLTVEKAADVTWEEEAEQTGVSHNLMITVDDDGTMRIKDDETENILTVLLK). Residues 1396 to 1435 (VEKAADVTWEEEAEQTGVSHNLMITVDDDGTMRIKDDETE) form an interacts with and activates NS3 protease region. The helical intramembrane region spans 1444–1464 (TALLIVSGIFPYSIPATMLVW). Topologically, residues 1465–2146 (HTWQKQTQRS…VEELPETMET (682 aa)) are cytoplasmic. The Peptidase S7 domain maps to 1474–1651 (SGVLWDVPSP…NAEPDGPTPE (178 aa)). Residues H1524, D1548, and S1608 each act as charge relay system; for serine protease NS3 activity in the active site. Positions 1654 to 1810 (EEMFKKRNLT…QSNAPIQDEE (157 aa)) constitute a Helicase ATP-binding domain. Residues 1658–1661 (KKRN) form an important for RNA-binding region. Residue 1667–1674 (LHPGSGKT) participates in ATP binding. The short motif at 1758-1761 (DEAH) is the DEAH box element. Residues 1821-1986 (GNEWITDFVG…GIIPALFEPE (166 aa)) form the Helicase C-terminal domain. K1862 is subject to N6-acetyllysine; by host. The helical transmembrane segment at 2147–2167 (LLLLGLMILLTGGAMLFLISG) threads the bilayer. At 2168 to 2169 (KG) the chain is on the lumenal side. The segment at residues 2170–2190 (IGKTSIGLICVIASSGMLWMA) is an intramembrane region (helical). A topological domain (lumenal) is located at residue D2191. The helical transmembrane segment at 2192–2212 (VPLQWIASAIVLEFFMMVLLI) threads the bilayer. The Cytoplasmic segment spans residues 2213–2227 (PEPEKQRTPQDNQLA). The helical transmembrane segment at 2228–2248 (YVVIGILTLAAIVAANEMGLL) threads the bilayer. Over 2249–2273 (ETTKRDLGMSKEPGVVSPTSYLDVD) the chain is Lumenal. An intramembrane region (helical) is located at residues 2274–2294 (LHPASAWTLYAVATTVITPML). Topologically, residues 2295–2305 (RHTIENSTANV) are lumenal. N-linked (GlcNAc...) asparagine; by host glycosylation is found at N2300 and N2304. An intramembrane region (helical) is located at residues 2306–2326 (SLAAIANQAVVLMGLDKGWPI). Over 2327–2346 (SKMDLGVPLLALGCYSQVNP) the chain is Lumenal. Residues 2347-2367 (LTLIAAVLLLVTHYAIIGPGL) form a helical membrane-spanning segment. Residues 2368-2412 (QAKATREAQKRTAAGIMKNPTVDGIMTIDLDPVIYDSKFEKQLGQ) are Cytoplasmic-facing. Residues 2413–2433 (VMLLVLCAVQLLLMRTSWALC) traverse the membrane as a helical segment. At 2434 to 2458 (EVLTLATGPITTLWEGSPGKFWNTT) the chain is on the lumenal side. N-linked (GlcNAc...) asparagine; by host glycosylation occurs at N2456. A helical transmembrane segment spans residues 2459-2479 (IAVSMANIFRGSYLAGAGLAL). Residues 2480 to 3390 (SIMKSVGTGK…KEEESEGAIW (911 aa)) are Cytoplasmic-facing. The 262-residue stretch at 2492 to 2753 (TGSQGETLGE…DVDLGAGTRH (262 aa)) folds into the mRNA cap 0-1 NS5-type MT domain. Position 2546 (S2546) interacts with S-adenosyl-L-methionine. S2546 carries the phosphoserine modification. K2551 serves as the catalytic For 2'-O-MTase activity. Residues 2567 to 2570 (VIDL) carry the SUMO-interacting motif motif. S-adenosyl-L-methionine is bound by residues G2576, W2577, T2594, K2595, D2621, and V2622. D2636 acts as the For 2'-O-MTase activity in catalysis. I2637 contacts S-adenosyl-L-methionine. Catalysis depends on for 2'-O-MTase activity residues K2670 and E2706. Y2708 is an S-adenosyl-L-methionine binding site. Zn(2+) is bound by residues E2927, H2931, C2936, and C2939. The RdRp catalytic domain maps to 3018–3168 (AMYADDTAGW…PIDDRFANAL (151 aa)). Positions 3202, 3218, and 3337 each coordinate Zn(2+).

It in the N-terminal section; belongs to the class I-like SAM-binding methyltransferase superfamily. mRNA cap 0-1 NS5-type methyltransferase family. As to quaternary structure, homodimer. Interacts (via N-terminus) with host EXOC1 (via C-terminus); this interaction results in EXOC1 degradation through the proteasome degradation pathway. Forms heterodimers with envelope protein E in the endoplasmic reticulum and Golgi. In terms of assembly, homodimer; in the endoplasmic reticulum and Golgi. Interacts with protein prM. Interacts with non-structural protein 1. As to quaternary structure, homodimer; Homohexamer when secreted. Interacts with envelope protein E. Interacts (via N-terminus) with serine protease NS3. In terms of assembly, forms a heterodimer with serine protease NS3. May form homooligomers. As to quaternary structure, forms a heterodimer with NS2B. Interacts with NS4B. Interacts with unphosphorylated RNA-directed RNA polymerase NS5; this interaction stimulates RNA-directed RNA polymerase NS5 guanylyltransferase activity. Interacts with host SHFL. Interacts with host MAVS; this interaction inhibits the synthesis of IFN-beta. Interacts with host SHFL. Interacts with host AUP1; the interaction occurs in the presence of Dengue virus NS4B and induces lipophagy which facilitates production of virus progeny particles. In terms of assembly, interacts with serine protease NS3. As to quaternary structure, homodimer. Interacts with host STAT2; this interaction inhibits the phosphorylation of the latter, and, when all viral proteins are present (polyprotein), targets STAT2 for degradation. Interacts with serine protease NS3. In terms of processing, specific enzymatic cleavages in vivo yield mature proteins. Cleavages in the lumen of endoplasmic reticulum are performed by host signal peptidase, whereas cleavages in the cytoplasmic side are performed by serine protease NS3. Signal cleavage at the 2K-4B site requires a prior NS3 protease-mediated cleavage at the 4A-2K site. Post-translationally, cleaved in post-Golgi vesicles by a host furin, releasing the mature small envelope protein M, and peptide pr. This cleavage is incomplete as up to 30% of viral particles still carry uncleaved prM. N-glycosylated. In terms of processing, N-glycosylated. The excreted form is glycosylated and this is required for efficient secretion of the protein from infected cells. Post-translationally, acetylated by host KAT5. Acetylation modulates NS3 RNA-binding and unwinding activities and plays an important positive role for viral replication. Sumoylation of RNA-directed RNA polymerase NS5 increases NS5 protein stability allowing proper viral RNA replication. In terms of processing, phosphorylated on serines residues. This phosphorylation may trigger NS5 nuclear localization.

The protein resides in the virion. It is found in the host nucleus. It localises to the host cytoplasm. Its subcellular location is the host perinuclear region. The protein localises to the secreted. The protein resides in the virion membrane. It is found in the host endoplasmic reticulum membrane. It localises to the host mitochondrion. The catalysed reaction is Selective hydrolysis of -Xaa-Xaa-|-Yaa- bonds in which each of the Xaa can be either Arg or Lys and Yaa can be either Ser or Ala.. The enzyme catalyses RNA(n) + a ribonucleoside 5'-triphosphate = RNA(n+1) + diphosphate. It carries out the reaction a ribonucleoside 5'-triphosphate + H2O = a ribonucleoside 5'-diphosphate + phosphate + H(+). It catalyses the reaction ATP + H2O = ADP + phosphate + H(+). The catalysed reaction is a 5'-end (5'-triphosphoguanosine)-ribonucleoside in mRNA + S-adenosyl-L-methionine = a 5'-end (N(7)-methyl 5'-triphosphoguanosine)-ribonucleoside in mRNA + S-adenosyl-L-homocysteine. The enzyme catalyses a 5'-end (N(7)-methyl 5'-triphosphoguanosine)-ribonucleoside in mRNA + S-adenosyl-L-methionine = a 5'-end (N(7)-methyl 5'-triphosphoguanosine)-(2'-O-methyl-ribonucleoside) in mRNA + S-adenosyl-L-homocysteine + H(+). Plays a role in virus budding by binding to the cell membrane and gathering the viral RNA into a nucleocapsid that forms the core of a mature virus particle. During virus entry, may induce genome penetration into the host cytoplasm after hemifusion induced by the surface proteins. Can migrate to the cell nucleus where it modulates host functions. Overcomes the anti-viral effects of host EXOC1 by sequestering and degrading the latter through the proteasome degradation pathway. Its function is as follows. Inhibits RNA silencing by interfering with host Dicer. Functionally, prevents premature fusion activity of envelope proteins in trans-Golgi by binding to envelope protein E at pH6.0. After virion release in extracellular space, gets dissociated from E dimers. In terms of biological role, acts as a chaperone for envelope protein E during intracellular virion assembly by masking and inactivating envelope protein E fusion peptide. prM is the only viral peptide matured by host furin in the trans-Golgi network probably to avoid catastrophic activation of the viral fusion activity in acidic Golgi compartment prior to virion release. prM-E cleavage is inefficient, and many virions are only partially matured. These uncleaved prM would play a role in immune evasion. May play a role in virus budding. Exerts cytotoxic effects by activating a mitochondrial apoptotic pathway through M ectodomain. May display a viroporin activity. Its function is as follows. Binds to host cell surface receptor and mediates fusion between viral and cellular membranes. Envelope protein is synthesized in the endoplasmic reticulum in the form of heterodimer with protein prM. They play a role in virion budding in the ER, and the newly formed immature particle is covered with 60 spikes composed of heterodimer between precursor prM and envelope protein E. The virion is transported to the Golgi apparatus where the low pH causes dissociation of PrM-E heterodimers and formation of E homodimers. prM-E cleavage is inefficient, and many virions are only partially matured. These uncleaved prM would play a role in immune evasion. Functionally, involved in immune evasion, pathogenesis and viral replication. Once cleaved off the polyprotein, is targeted to three destinations: the viral replication cycle, the plasma membrane and the extracellular compartment. Essential for viral replication. Required for formation of the replication complex and recruitment of other non-structural proteins to the ER-derived membrane structures. Excreted as a hexameric lipoparticle that plays a role against host immune response. Antagonizing the complement function. Binds to the host macrophages and dendritic cells. Inhibits signal transduction originating from Toll-like receptor 3 (TLR3). In terms of biological role, disrupts the host endothelial glycocalyx layer of host pulmonary microvascular endothelial cells, inducing degradation of sialic acid and shedding of heparan sulfate proteoglycans. NS1 induces expression of sialidases, heparanase, and activates cathepsin L, which activates heparanase via enzymatic cleavage. These effects are probably linked to the endothelial hyperpermeability observed in severe dengue disease. Component of the viral RNA replication complex that functions in virion assembly and antagonizes the host immune response. Its function is as follows. Required cofactor for the serine protease function of NS3. May have membrane-destabilizing activity and form viroporins. Functionally, displays three enzymatic activities: serine protease, NTPase and RNA helicase. NS3 serine protease, in association with NS2B, performs its autocleavage and cleaves the polyprotein at dibasic sites in the cytoplasm: C-prM, NS2A-NS2B, NS2B-NS3, NS3-NS4A, NS4A-2K and NS4B-NS5. NS3 RNA helicase binds RNA and unwinds dsRNA in the 3' to 5' direction. In terms of biological role, regulates the ATPase activity of the NS3 helicase activity. NS4A allows NS3 helicase to conserve energy during unwinding. Plays a role in the inhibition of the host innate immune response. Interacts with host MAVS and thereby prevents the interaction between RIGI and MAVS. In turn, IFN-beta production is impaired. Interacts with host AUP1 which mediates induction of lipophagy in host cells and facilitates production of virus progeny particles. Functions as a signal peptide for NS4B and is required for the interferon antagonism activity of the latter. Its function is as follows. Induces the formation of ER-derived membrane vesicles where the viral replication takes place. Inhibits interferon (IFN)-induced host STAT1 phosphorylation and nuclear translocation, thereby preventing the establishment of cellular antiviral state by blocking the IFN-alpha/beta pathway. Functionally, replicates the viral (+) and (-) RNA genome, and performs the capping of genomes in the cytoplasm. NS5 methylates viral RNA cap at guanine N-7 and ribose 2'-O positions. Besides its role in RNA genome replication, also prevents the establishment of cellular antiviral state by blocking the interferon-alpha/beta (IFN-alpha/beta) signaling pathway. Inhibits host TYK2 and STAT2 phosphorylation, thereby preventing activation of JAK-STAT signaling pathway. The chain is Genome polyprotein from Dengue virus type 3 (strain Philippines/H87/1956) (DENV-3).